Reading from the N-terminus, the 234-residue chain is 7-cyano-7-deazaguanine synthase (234 aa).

Residue 8-18 participates in ATP binding; that stretch reads FSGGQDSTTCA. Zn(2+)-binding residues include Cys-194, Cys-202, Cys-205, and Cys-208.

It belongs to the QueC family. It depends on Zn(2+) as a cofactor.

It catalyses the reaction 7-carboxy-7-deazaguanine + NH4(+) + ATP = 7-cyano-7-deazaguanine + ADP + phosphate + H2O + H(+). It functions in the pathway purine metabolism; 7-cyano-7-deazaguanine biosynthesis. Catalyzes the ATP-dependent conversion of 7-carboxy-7-deazaguanine (CDG) to 7-cyano-7-deazaguanine (preQ(0)). This Gloeobacter violaceus (strain ATCC 29082 / PCC 7421) protein is 7-cyano-7-deazaguanine synthase.